We begin with the raw amino-acid sequence, 475 residues long: tRNA modification GTPase MnmE (475 aa).

(6S)-5-formyl-5,6,7,8-tetrahydrofolate contacts are provided by Arg-24, Glu-81, and Lys-124. The TrmE-type G domain maps to 220–397 (GLSVVLAGQP…LRRELLRLVG (178 aa)). Residue Asn-230 coordinates K(+). Residues 230–235 (NVGKSS), 249–255 (TPIAGTT), 274–277 (DTAG), and 378–380 (SAR) contribute to the GTP site. Ser-234 lines the Mg(2+) pocket. The K(+) site is built by Thr-249, Ile-251, and Thr-254. Thr-255 provides a ligand contact to Mg(2+). Lys-475 lines the (6S)-5-formyl-5,6,7,8-tetrahydrofolate pocket.

The protein belongs to the TRAFAC class TrmE-Era-EngA-EngB-Septin-like GTPase superfamily. TrmE GTPase family. Homodimer. Heterotetramer of two MnmE and two MnmG subunits. The cofactor is K(+).

The protein localises to the cytoplasm. Functionally, exhibits a very high intrinsic GTPase hydrolysis rate. Involved in the addition of a carboxymethylaminomethyl (cmnm) group at the wobble position (U34) of certain tRNAs, forming tRNA-cmnm(5)s(2)U34. This is tRNA modification GTPase MnmE from Cupriavidus necator (strain ATCC 17699 / DSM 428 / KCTC 22496 / NCIMB 10442 / H16 / Stanier 337) (Ralstonia eutropha).